A 521-amino-acid chain; its full sequence is Bifunctional purine biosynthesis protein PurH (521 aa).

One can recognise an MGS-like domain in the interval 1–147 (MAVIKRALIS…KNNRDVTVVV (147 aa)).

Belongs to the PurH family.

It carries out the reaction (6R)-10-formyltetrahydrofolate + 5-amino-1-(5-phospho-beta-D-ribosyl)imidazole-4-carboxamide = 5-formamido-1-(5-phospho-D-ribosyl)imidazole-4-carboxamide + (6S)-5,6,7,8-tetrahydrofolate. The enzyme catalyses IMP + H2O = 5-formamido-1-(5-phospho-D-ribosyl)imidazole-4-carboxamide. The protein operates within purine metabolism; IMP biosynthesis via de novo pathway; 5-formamido-1-(5-phospho-D-ribosyl)imidazole-4-carboxamide from 5-amino-1-(5-phospho-D-ribosyl)imidazole-4-carboxamide (10-formyl THF route): step 1/1. It participates in purine metabolism; IMP biosynthesis via de novo pathway; IMP from 5-formamido-1-(5-phospho-D-ribosyl)imidazole-4-carboxamide: step 1/1. The polypeptide is Bifunctional purine biosynthesis protein PurH (Syntrophotalea carbinolica (strain DSM 2380 / NBRC 103641 / GraBd1) (Pelobacter carbinolicus)).